A 287-amino-acid chain; its full sequence is Zinc transporter ZIP9 (287 aa).

Residues 4–24 (FLSISLLSLAMLVGCYVAGII) traverse the membrane as a helical segment. N-linked (GlcNAc...) asparagine glycosylation is present at Asn29. Helical transmembrane passes span 35 to 55 (LKLV…AVIV), 107 to 127 (AYIG…DQIG), 147 to 167 (ITTT…LGAA), 177 to 197 (LIVF…LVSF), and 211 to 231 (HLLV…LGLS). A glycan (N-linked (GlcNAc...) asparagine) is linked at Asn242. The chain crosses the membrane as a helical span at residues 245 to 265 (GVAMLFSAGTFLYVATVHVLP). The tract at residues 268 to 287 (TSTNQSGSSLSPRPLPSGKN) is disordered. A glycan (N-linked (GlcNAc...) asparagine) is linked at Asn271. Positions 273 to 287 (SGSSLSPRPLPSGKN) are enriched in low complexity.

This sequence belongs to the ZIP transporter (TC 2.A.5) family.

The protein localises to the golgi apparatus. Its subcellular location is the trans-Golgi network membrane. The protein resides in the cell membrane. It localises to the cytoplasm. It is found in the perinuclear region. The protein localises to the mitochondrion. Its subcellular location is the nucleus. The catalysed reaction is Zn(2+)(in) = Zn(2+)(out). Transports zinc ions across cell and organelle membranes into the cytoplasm and regulates intracellular zinc homeostasis. Participates in the zinc ions efflux out of the secretory compartments. Regulates intracellular zinc level, resulting in the enhancement of AKT1 and MAPK3/MAPK1 (Erk1/2) phosphorylation in response to the BCR activation. Also functions as a membrane androgen receptor that mediates, through a G protein, the non-classical androgen signaling pathway, characterized by the activation of MAPK3/MAPK1 (Erk1/2) and transcription factors CREB1 or ATF1. This pathway contributes to CLDN1 and CLDN5 expression and tight junction formation between adjacent Sertoli cells. Mediates androgen-induced vascular endothelial cell proliferation through activation of an inhibitory G protein leading to the AKT1 and MAPK3/MAPK1 (Erk1/2) activation which in turn modulate inhibition (phosphorylation) of GSK3B and CCND1 transcription. Moreover, has dual functions as a membrane-bound androgen receptor and as an androgen-dependent zinc transporter both of which are mediated through an inhibitory G protein (Gi) that mediates both MAP kinase and zinc signaling leading to the androgen-dependent apoptotic process. This Rattus norvegicus (Rat) protein is Zinc transporter ZIP9.